We begin with the raw amino-acid sequence, 385 residues long: tRNA pseudouridine synthase D (385 aa).

Catalysis depends on aspartate 86, which acts as the Nucleophile. One can recognise a TRUD domain in the interval glycine 165–proline 305.

This sequence belongs to the pseudouridine synthase TruD family.

It carries out the reaction uridine(13) in tRNA = pseudouridine(13) in tRNA. Its function is as follows. Responsible for synthesis of pseudouridine from uracil-13 in transfer RNAs. The chain is tRNA pseudouridine synthase D from Helicobacter hepaticus (strain ATCC 51449 / 3B1).